The sequence spans 281 residues: CDAN1-interacting nuclease 1 (281 aa).

It localises to the nucleus. Its subcellular location is the cytoplasm. In terms of biological role, plays a role in erythroid cell differentiation. In Bos taurus (Bovine), this protein is CDAN1-interacting nuclease 1 (CDIN1).